The primary structure comprises 266 residues: Probable phosphoadenosine phosphosulfate reductase (266 aa).

The interval 219 to 246 is disordered; sequence TQPVREGEDERAGRWRGREKTECGLHSH. Residues 223–243 show a composition bias toward basic and acidic residues; it reads REGEDERAGRWRGREKTECGL.

This sequence belongs to the PAPS reductase family. CysH subfamily.

It localises to the cytoplasm. Its subcellular location is the nucleus. It catalyses the reaction [thioredoxin]-disulfide + sulfite + adenosine 3',5'-bisphosphate + 2 H(+) = [thioredoxin]-dithiol + 3'-phosphoadenylyl sulfate. It participates in sulfur metabolism; hydrogen sulfide biosynthesis; sulfite from sulfate: step 3/3. Functionally, the NADP dependent reduction of PAPS into sulfite involves thioredoxin which probably plays the role of a thiol carrier. Required for methionine synthesis. This chain is Probable phosphoadenosine phosphosulfate reductase (met16), found in Schizosaccharomyces pombe (strain 972 / ATCC 24843) (Fission yeast).